The chain runs to 199 residues: Small ribosomal subunit protein uS7 (199 aa).

Belongs to the universal ribosomal protein uS7 family. In terms of assembly, part of the 30S ribosomal subunit.

One of the primary rRNA binding proteins, it binds directly to 16S rRNA where it nucleates assembly of the head domain of the 30S subunit. Is located at the subunit interface close to the decoding center. This chain is Small ribosomal subunit protein uS7, found in Cenarchaeum symbiosum (strain A).